A 181-amino-acid polypeptide reads, in one-letter code: MTDVDIKIENIVASASIGKDIVLTEVSEALEGVNFNREQFPGLVFKLKDPKTAALIFSSGKLVCTGAKSIDDSKLAIKKTVDLMRTIDTEIPHEFEIKIQNIVASANLESTLNLEAVALELEDTEYEPEQFPGLVYRLSDPKVVLLLFGSGKVVCTGAKTRSDAKLGVERAYDRLSELDLI.

2 tandem repeats follow at residues Ile-8 to Met-84 and Ile-99 to Leu-175.

This sequence belongs to the TBP family.

Its function is as follows. General factor that plays a role in the activation of archaeal genes transcribed by RNA polymerase. Binds specifically to the TATA box promoter element which lies close to the position of transcription initiation. This Methanobrevibacter smithii (strain ATCC 35061 / DSM 861 / OCM 144 / PS) protein is TATA-box-binding protein.